A 542-amino-acid polypeptide reads, in one-letter code: Membrane protein insertase YidC (542 aa).

6 helical membrane passes run 6–26 (NILL…WQTD), 326–346 (LVVD…LLMF), 350–370 (FVGN…GGLY), 421–441 (GGCL…WVLL), 458–478 (LSVQ…MFLM), and 501–521 (VIFT…WLVG).

It belongs to the OXA1/ALB3/YidC family. Type 1 subfamily. As to quaternary structure, interacts with the Sec translocase complex via SecD. Specifically interacts with transmembrane segments of nascent integral membrane proteins during membrane integration.

Its subcellular location is the cell inner membrane. Its function is as follows. Required for the insertion and/or proper folding and/or complex formation of integral membrane proteins into the membrane. Involved in integration of membrane proteins that insert both dependently and independently of the Sec translocase complex, as well as at least some lipoproteins. Aids folding of multispanning membrane proteins. The chain is Membrane protein insertase YidC from Shewanella frigidimarina (strain NCIMB 400).